The following is a 144-amino-acid chain: Large ribosomal subunit protein uL15 (144 aa).

Residues 1–58 (MNLSNLRAPRKANEKKKRVGRGMGSGMGKTSARGHKGQRSRSGSRMMRGFEGGQMPLH) are disordered. A compositionally biased stretch (basic residues) spans 8 to 20 (APRKANEKKKRVG). The segment covering 40–49 (SRSGSRMMRG) has biased composition (low complexity).

It belongs to the universal ribosomal protein uL15 family. As to quaternary structure, part of the 50S ribosomal subunit.

In terms of biological role, binds to the 23S rRNA. The protein is Large ribosomal subunit protein uL15 of Koribacter versatilis (strain Ellin345).